Here is a 500-residue protein sequence, read N- to C-terminus: Probable zinc metalloprotease MGYG_02393 (500 aa).

Positions 1 to 24 (MHLSMGGLLPGLALLASANALALA) are cleaved as a signal peptide. N-linked (GlcNAc...) asparagine glycans are attached at residues N61, N103, and N124. 3 residues coordinate Zn(2+): H174, D194, and E230. N245 carries an N-linked (GlcNAc...) asparagine glycan. D257 contributes to the Zn(2+) binding site. One can recognise a Fibronectin type-III domain in the interval 414–500 (MPRNVRVNTS…ERGVAVLPFP (87 aa)). 2 N-linked (GlcNAc...) asparagine glycosylation sites follow: N421 and N427.

This sequence belongs to the peptidase M28 family. M28B subfamily. Zn(2+) is required as a cofactor.

Its subcellular location is the secreted. The chain is Probable zinc metalloprotease MGYG_02393 from Arthroderma gypseum (strain ATCC MYA-4604 / CBS 118893) (Microsporum gypseum).